A 537-amino-acid polypeptide reads, in one-letter code: Putative cysteine ligase BshC (537 aa).

It belongs to the BshC family.

Involved in bacillithiol (BSH) biosynthesis. May catalyze the last step of the pathway, the addition of cysteine to glucosamine malate (GlcN-Mal) to generate BSH. This is Putative cysteine ligase BshC from Staphylococcus saprophyticus subsp. saprophyticus (strain ATCC 15305 / DSM 20229 / NCIMB 8711 / NCTC 7292 / S-41).